Here is a 1705-residue protein sequence, read N- to C-terminus: Homeobox-DDT domain protein RLT1 (1705 aa).

Disordered stretches follow at residues Met-1–Thr-53, Glu-118–Thr-167, His-237–Met-267, Gly-296–Pro-322, and Gly-352–Glu-414. Residues Val-39–Gly-98 constitute a DNA-binding region (homeobox). Residues Gly-136–Arg-159 are compositionally biased toward low complexity. Polar residues-rich tracts occupy residues Glu-253–Pro-265 and Arg-310–Met-319. Positions Asp-549 to Asp-608 constitute a DDT domain. The HTH HARE-type domain occupies Gly-731–Pro-800. 5 disordered regions span residues Thr-1028–Asn-1053, Val-1198–Val-1229, Pro-1441–Ser-1502, Pro-1561–Tyr-1635, and Ala-1652–Ser-1705. Positions Ser-1201–Ser-1220 are enriched in low complexity. Over residues Ser-1455–Gln-1465 the composition is skewed to basic and acidic residues. 3 stretches are compositionally biased toward acidic residues: residues Glu-1565–Glu-1574, Val-1611–Gly-1628, and Gly-1669–Val-1684.

In terms of assembly, interacts with CHR11 and CHR17. Interacts (via the DDT domain) with CHR11 (via C-terminus). As to expression, highly expressed in growing tissues such as inflorescence and flower meristems, young leaves and floral organs. Expressed in roots, rosette and cauline leaves, stems, flowers, inflorescences and siliques.

The protein resides in the nucleus. Functionally, transcriptional regulator required for the maintenance of the plant vegetative phase. In association with CHR11 or CHR17 may prevent the early activation of the vegetative-to-reproductive transition by regulating key genes that contribute to flower timing, such as FT, SEP1, SEP3, AGL8/FUL, SOC1 and FLC. This chain is Homeobox-DDT domain protein RLT1, found in Arabidopsis thaliana (Mouse-ear cress).